We begin with the raw amino-acid sequence, 348 residues long: Protein RecA (348 aa).

67 to 74 contributes to the ATP binding site; the sequence is GPESSGKT.

The protein belongs to the RecA family.

The protein resides in the cytoplasm. Can catalyze the hydrolysis of ATP in the presence of single-stranded DNA, the ATP-dependent uptake of single-stranded DNA by duplex DNA, and the ATP-dependent hybridization of homologous single-stranded DNAs. It interacts with LexA causing its activation and leading to its autocatalytic cleavage. The polypeptide is Protein RecA (Salinispora tropica (strain ATCC BAA-916 / DSM 44818 / JCM 13857 / NBRC 105044 / CNB-440)).